Here is a 200-residue protein sequence, read N- to C-terminus: ATP-dependent Clp protease proteolytic subunit 1 (200 aa).

Ser-102 acts as the Nucleophile in catalysis. His-127 is a catalytic residue.

This sequence belongs to the peptidase S14 family. In terms of assembly, fourteen ClpP subunits assemble into 2 heptameric rings which stack back to back to give a disk-like structure with a central cavity, resembling the structure of eukaryotic proteasomes.

It localises to the cytoplasm. The catalysed reaction is Hydrolysis of proteins to small peptides in the presence of ATP and magnesium. alpha-casein is the usual test substrate. In the absence of ATP, only oligopeptides shorter than five residues are hydrolyzed (such as succinyl-Leu-Tyr-|-NHMec, and Leu-Tyr-Leu-|-Tyr-Trp, in which cleavage of the -Tyr-|-Leu- and -Tyr-|-Trp bonds also occurs).. Its function is as follows. Cleaves peptides in various proteins in a process that requires ATP hydrolysis. Has a chymotrypsin-like activity. Plays a major role in the degradation of misfolded proteins. In Bradyrhizobium diazoefficiens (strain JCM 10833 / BCRC 13528 / IAM 13628 / NBRC 14792 / USDA 110), this protein is ATP-dependent Clp protease proteolytic subunit 1.